The primary structure comprises 54 residues: MVGTCPECGAELRLENPELGELVVCEDCGAELEVVGLDPLRLEPAPEEAEDWGE.

The TFIIB-type zinc-finger motif lies at 1–33 (MVGTCPECGAELRLENPELGELVVCEDCGAELE). The Fe cation site is built by C5, C8, C25, and C28. Residue E50 is a short sequence motif, EDWGE. E54 is subject to 5-glutamyl 2-aminoadipic acid; alternate. E54 carries the post-translational modification 5-glutamyl N2-lysine; alternate.

Formation of an isopeptide bond between the gamma-carboxyl group of the C-terminal glutamate and the amino group of alpha-aminoadipate (AAA) is catalyzed by LysX. The bound AAA is then converted to L-lysine in a series of reactions catalyzed by LysZ, LysY and LysJ. Release of the product L-lysine is catalyzed by LysK.

It functions in the pathway amino-acid biosynthesis; L-lysine biosynthesis via AAA pathway. Carrier protein that bears the covalently bound substrates for lysine biosynthesis; the bound alpha-aminoadipate (AAA) is sequentially converted to L-lysine. This chain is Alpha-aminoadipate carrier protein LysW (lysW), found in Thermus thermophilus (strain ATCC 27634 / DSM 579 / HB8).